Consider the following 339-residue polypeptide: DNA-directed RNA polymerase subunit alpha (339 aa).

The alpha N-terminal domain (alpha-NTD) stretch occupies residues 1 to 235 (MVLQKNWQSL…DQLQLFINFD (235 aa)). The interval 251 to 339 (FNRNLLRKVD…DLAKRLDETF (89 aa)) is alpha C-terminal domain (alpha-CTD).

Belongs to the RNA polymerase alpha chain family. As to quaternary structure, homodimer. The RNAP catalytic core consists of 2 alpha, 1 beta, 1 beta' and 1 omega subunit. When a sigma factor is associated with the core the holoenzyme is formed, which can initiate transcription.

It catalyses the reaction RNA(n) + a ribonucleoside 5'-triphosphate = RNA(n+1) + diphosphate. In terms of biological role, DNA-dependent RNA polymerase catalyzes the transcription of DNA into RNA using the four ribonucleoside triphosphates as substrates. The protein is DNA-directed RNA polymerase subunit alpha of Gluconobacter oxydans (strain 621H) (Gluconobacter suboxydans).